The sequence spans 1461 residues: Phospholipid-transporting ATPase VB (1461 aa).

Residues 1 to 82 lie on the Cytoplasmic side of the membrane; the sequence is MALSVDSSWH…TTKYTLFTFL (82 aa). A helical transmembrane segment spans residues 83–104; that stretch reads PRNLFEQFHRWANLYFLFLVIL. Residues 105–110 are Exoplasmic loop-facing; it reads NWMPSM. The helical transmembrane segment at 111–132 threads the bilayer; sequence EVFHREITMLPLAIVLFVIMIK. The Cytoplasmic segment spans residues 133 to 316; it reads DGMEDFKRHR…SKIERRMNID (184 aa). A helical transmembrane segment spans residues 317-338; sequence IFFCIGILILMCLIGAVGHSIW. Topologically, residues 339 to 368 are exoplasmic loop; it reads NGTFEEHPPFDVPDANGSFLPSALGGFYMF. The chain crosses the membrane as a helical span at residues 369–390; that stretch reads LTMIILLQVLIPISLYVSIELV. The Cytoplasmic segment spans residues 391-1111; the sequence is KLGQVFFLSN…GHWCYSRLAR (721 aa). The active-site 4-aspartylphosphate intermediate is the aspartate 433. ATP-binding residues include aspartate 433, lysine 434, and threonine 435. Aspartate 433 lines the Mg(2+) pocket. Residue threonine 435 participates in Mg(2+) binding. Polar residues-rich tracts occupy residues 496-511 and 530-539; these read MRSQ…SQSA and SQPPVAFSSS. 2 disordered regions span residues 496-541 and 640-687; these read MRSQ…SSIE and TAPS…MWDQ. ATP contacts are provided by glutamate 724, phenylalanine 766, lysine 790, arginine 835, threonine 915, glycine 916, aspartate 917, arginine 1029, and lysine 1035. Aspartate 1055 serves as a coordination point for Mg(2+). 2 residues coordinate ATP: asparagine 1058 and aspartate 1059. Mg(2+) is bound at residue aspartate 1059. A helical transmembrane segment spans residues 1112–1132; sequence MVVYYLYKNVCYVNLLFWYQF. Topologically, residues 1133-1144 are exoplasmic loop; the sequence is FCGFSSSTMIDY. Residues 1145–1164 form a helical membrane-spanning segment; sequence WQMIFFNLFFTSLPPLVFGV. The Cytoplasmic segment spans residues 1165-1194; that stretch reads LDKDISAETLLALPELYKSGQNSECYNLST. The helical transmembrane segment at 1195–1216 threads the bilayer; it reads FWISMVDAFYQSLICFFIPYLA. Residues 1217–1223 lie on the Exoplasmic loop side of the membrane; it reads YKGSDID. Residues 1224–1246 form a helical membrane-spanning segment; sequence VFTFGTPINTISLTTILLHQAME. The Cytoplasmic segment spans residues 1247–1252; it reads MKTWTI. The chain crosses the membrane as a helical span at residues 1253–1273; sequence FHGVVLLGSFLMYFLVSLLYN. Residues 1274 to 1291 are Exoplasmic loop-facing; the sequence is ATCVICNSPTNPYWVMEG. The chain crosses the membrane as a helical span at residues 1292–1316; the sequence is QLSNPTFYLVCFLTPVVALLPRYFF. The Cytoplasmic segment spans residues 1317–1461; that stretch reads LSLQGTCGKS…HRRSQSSLTI (145 aa). The interval 1346-1397 is disordered; it reads IQSWRSRQRPAPVPEVARPTHHPVSSITGQDFSASTPKSSNPPKRKHVEESV. The span at 1368 to 1387 shows a compositional bias: polar residues; sequence PVSSITGQDFSASTPKSSNP.

Belongs to the cation transport ATPase (P-type) (TC 3.A.3) family. Type IV subfamily. Component of a P4-ATPase flippase complex which consists of a catalytic alpha subunit ATP10B and an accessory beta subunit TMEM30A. Requires Mg(2+) as cofactor. In terms of processing, autophosphorylated at the conserved aspartate of the P-type ATPase signature sequence. As to expression, expressed in predominantly in brain structures including medulla oblongata, substantia nigra and basal ganglia. Expressed in the gastrointestinal system with highest levels in the small intestine and colon. Also expressed at low levels in testis and thymus.

Its subcellular location is the late endosome membrane. The protein localises to the lysosome membrane. It localises to the endoplasmic reticulum membrane. It catalyses the reaction ATP + H2O + phospholipidSide 1 = ADP + phosphate + phospholipidSide 2.. It carries out the reaction a beta-D-glucosyl-(1&lt;-&gt;1')-N-acylsphing-4-enine(out) + ATP + H2O = a beta-D-glucosyl-(1&lt;-&gt;1')-N-acylsphing-4-enine(in) + ADP + phosphate + H(+). Catalytic component of a P4-ATPase flippase complex, which catalyzes the hydrolysis of ATP coupled to the transport of glucosylceramide (GlcCer) from the outer to the inner leaflet of lysosome membranes. Plays an important role in the maintenance of lysosome membrane integrity and function in cortical neurons. In Homo sapiens (Human), this protein is Phospholipid-transporting ATPase VB.